Here is a 120-residue protein sequence, read N- to C-terminus: MFLLHEYDIFWTFLIIASLIPILAFWISGLLAPVSEGPEKLSSYESGIEPMGGAWLQFRIRYYMFALVFVVFDVETVFLYPWAMSFDVLGVSVFIEAFIFVLILVVGLVYAWRKGALEWS.

Transmembrane regions (helical) follow at residues 9-29 (IFWT…WISG), 64-84 (MFAL…PWAM), and 88-108 (VLGV…VVGL).

The protein belongs to the complex I subunit 3 family. As to quaternary structure, NDH is composed of at least 16 different subunits, 5 of which are encoded in the nucleus.

Its subcellular location is the plastid. It is found in the chloroplast thylakoid membrane. It catalyses the reaction a plastoquinone + NADH + (n+1) H(+)(in) = a plastoquinol + NAD(+) + n H(+)(out). It carries out the reaction a plastoquinone + NADPH + (n+1) H(+)(in) = a plastoquinol + NADP(+) + n H(+)(out). Its function is as follows. NDH shuttles electrons from NAD(P)H:plastoquinone, via FMN and iron-sulfur (Fe-S) centers, to quinones in the photosynthetic chain and possibly in a chloroplast respiratory chain. The immediate electron acceptor for the enzyme in this species is believed to be plastoquinone. Couples the redox reaction to proton translocation, and thus conserves the redox energy in a proton gradient. This is NAD(P)H-quinone oxidoreductase subunit 3, chloroplastic from Lolium perenne (Perennial ryegrass).